The chain runs to 244 residues: Methylthioribulose-1-phosphate dehydratase (244 aa).

C89 is a binding site for substrate. Zn(2+) contacts are provided by H107 and H109. Residue E130 is the Proton donor/acceptor of the active site. H192 serves as a coordination point for Zn(2+).

This sequence belongs to the aldolase class II family. MtnB subfamily. The cofactor is Zn(2+).

Its subcellular location is the cytoplasm. It catalyses the reaction 5-(methylsulfanyl)-D-ribulose 1-phosphate = 5-methylsulfanyl-2,3-dioxopentyl phosphate + H2O. It functions in the pathway amino-acid biosynthesis; L-methionine biosynthesis via salvage pathway; L-methionine from S-methyl-5-thio-alpha-D-ribose 1-phosphate: step 2/6. Functionally, catalyzes the dehydration of methylthioribulose-1-phosphate (MTRu-1-P) into 2,3-diketo-5-methylthiopentyl-1-phosphate (DK-MTP-1-P). In Saccharomyces cerevisiae (strain ATCC 204508 / S288c) (Baker's yeast), this protein is Methylthioribulose-1-phosphate dehydratase.